Reading from the N-terminus, the 132-residue chain is Small ribosomal subunit protein uS8 (132 aa).

It belongs to the universal ribosomal protein uS8 family. Part of the 30S ribosomal subunit. Contacts proteins S5 and S12.

Functionally, one of the primary rRNA binding proteins, it binds directly to 16S rRNA central domain where it helps coordinate assembly of the platform of the 30S subunit. The chain is Small ribosomal subunit protein uS8 from Lactobacillus delbrueckii subsp. bulgaricus (strain ATCC BAA-365 / Lb-18).